We begin with the raw amino-acid sequence, 359 residues long: DNA replication and repair protein RecF (359 aa).

ATP is bound at residue 30–37 (GPNGSGKT).

The protein belongs to the RecF family.

The protein localises to the cytoplasm. The RecF protein is involved in DNA metabolism; it is required for DNA replication and normal SOS inducibility. RecF binds preferentially to single-stranded, linear DNA. It also seems to bind ATP. This chain is DNA replication and repair protein RecF, found in Aliivibrio fischeri (strain MJ11) (Vibrio fischeri).